A 257-amino-acid chain; its full sequence is Auxin-responsive protein IAA17 (257 aa).

Disordered regions lie at residues 1-51 (MSPP…PAAT) and 85-119 (GKKAAAGEEDEDAEEEDKKVAAAPQAPAAKAQVVG). Positions 33–37 (LRLGL) match the EAR-like (transcriptional repression) motif. Over residues 105-118 (AAAPQAPAAKAQVV) the composition is skewed to low complexity. Residues 151–239 (FLYVKVSMDG…SCRRLRIMKG (89 aa)) enclose the PB1 domain.

It belongs to the Aux/IAA family. In terms of assembly, homodimers and heterodimers. As to expression, highly expressed in etiolated seedlings and flowers. Expressed in roots and green seedlings.

The protein localises to the nucleus. Aux/IAA proteins are short-lived transcriptional factors that function as repressors of early auxin response genes at low auxin concentrations. The protein is Auxin-responsive protein IAA17 (IAA17) of Oryza sativa subsp. japonica (Rice).